Reading from the N-terminus, the 967-residue chain is Leucine--tRNA ligase (967 aa).

The 'HIGH' region signature appears at 43 to 53 (PYLSGHLHVGH). The 'KMSKS' region signature appears at 650-654 (KMSKS). Position 653 (K653) interacts with ATP.

It belongs to the class-I aminoacyl-tRNA synthetase family.

It is found in the cytoplasm. The enzyme catalyses tRNA(Leu) + L-leucine + ATP = L-leucyl-tRNA(Leu) + AMP + diphosphate. The protein is Leucine--tRNA ligase of Thermococcus onnurineus (strain NA1).